The following is a 392-amino-acid chain: Imidazolonepropionase (392 aa).

Residues H70 and H72 each coordinate Fe(3+). Zn(2+)-binding residues include H70 and H72. The 4-imidazolone-5-propanoate site is built by R79, Y137, and H164. Y137 is an N-formimidoyl-L-glutamate binding site. H227 contributes to the Fe(3+) binding site. Zn(2+) is bound at residue H227. 4-imidazolone-5-propanoate is bound at residue Q230. Residue D301 participates in Fe(3+) binding. Residue D301 coordinates Zn(2+). Residues N303 and G305 each contribute to the N-formimidoyl-L-glutamate site. 4-imidazolone-5-propanoate is bound at residue T306.

It belongs to the metallo-dependent hydrolases superfamily. HutI family. Requires Zn(2+) as cofactor. It depends on Fe(3+) as a cofactor.

The protein localises to the cytoplasm. It carries out the reaction 4-imidazolone-5-propanoate + H2O = N-formimidoyl-L-glutamate. It functions in the pathway amino-acid degradation; L-histidine degradation into L-glutamate; N-formimidoyl-L-glutamate from L-histidine: step 3/3. Catalyzes the hydrolytic cleavage of the carbon-nitrogen bond in imidazolone-5-propanoate to yield N-formimidoyl-L-glutamate. It is the third step in the universal histidine degradation pathway. The polypeptide is Imidazolonepropionase (Nocardia farcinica (strain IFM 10152)).